The chain runs to 464 residues: MAAGNSSWARAAFTFKATVFKKSRYVIYYSLLEHRFSLSLWGILKYSGIYFCTEILRSFPKKRCKSHPYRVDGYPAGSCLDPPLHEPLDTSTPKKISLVSCSNSYMRNKTDNGKVGSRNVSEYKLEGDFASTSKSIYYKLNNLEKMNRKLAWIEAVSSEFSFWEKLRSKQIFPFQNEKDLIAEPFNYELAVSHRRPVIYESISLVPRSVTRTLSRFKAELTNQSNLNLSVHNKFDLAKNQASVSLQYVGFLLFLFPIQIAIENWFLEPRIRGWWNIRQIQLFSNVFQEENALKQLREAEALFWLDDVIGNLADTQLQNFDTDARNETTRLAMMYDELNIQLLLRLATNAISIATLFPLLIFGRKRLAVLNSWIQELFYSLNDTMKAFSILLLTDLCVGFHSPHGWEILVQSLFEYFGLTPNKYVTPCFVSTFPVILDTLFKYWIFRHLNRTSPSIVATYHTMSE.

A run of 5 helical transmembrane segments spans residues 36 to 56, 241 to 261, 341 to 361, 389 to 409, and 425 to 445; these read FSLS…TEIL, ASVS…QIAI, LLLR…LLIF, ILLL…EILV, and TPCF…YWIF.

Belongs to the CemA family.

Its subcellular location is the plastid. It is found in the chloroplast inner membrane. The catalysed reaction is K(+)(in) + H(+)(out) = K(+)(out) + H(+)(in). Contributes to K(+)/H(+) antiport activity by supporting proton efflux to control proton extrusion and homeostasis in chloroplasts in a light-dependent manner to modulate photosynthesis. Prevents excessive induction of non-photochemical quenching (NPQ) under continuous-light conditions. Indirectly promotes efficient inorganic carbon uptake into chloroplasts. In Adiantum capillus-veneris (Maidenhair fern), this protein is Potassium/proton antiporter CemA.